The primary structure comprises 711 residues: Ribosomal RNA large subunit methyltransferase K/L (711 aa).

Residues 43-154 (LAYRITLWTR…NGVITIAMNF (112 aa)) enclose the THUMP domain.

It belongs to the methyltransferase superfamily. RlmKL family.

It localises to the cytoplasm. The catalysed reaction is guanosine(2445) in 23S rRNA + S-adenosyl-L-methionine = N(2)-methylguanosine(2445) in 23S rRNA + S-adenosyl-L-homocysteine + H(+). It catalyses the reaction guanosine(2069) in 23S rRNA + S-adenosyl-L-methionine = N(2)-methylguanosine(2069) in 23S rRNA + S-adenosyl-L-homocysteine + H(+). In terms of biological role, specifically methylates the guanine in position 2445 (m2G2445) and the guanine in position 2069 (m7G2069) of 23S rRNA. The polypeptide is Ribosomal RNA large subunit methyltransferase K/L (Shewanella oneidensis (strain ATCC 700550 / JCM 31522 / CIP 106686 / LMG 19005 / NCIMB 14063 / MR-1)).